The chain runs to 276 residues: Undecaprenyl-diphosphatase 2 (276 aa).

A run of 8 helical transmembrane segments spans residues 1–21, 44–64, 87–107, 114–134, 150–170, 190–210, 222–242, and 251–271; these read MSLWFLVFLSVLQGVTELFPV, QLLPFLVALHLGTALALLWYF, GHLMWALIIGTIPTGIVGLLL, VFHDLRIVAIALIVNGVLLWL, MTFKQAFFVGLAQIGALIPGF, AAEFSFLLGTPIIFAAGVLEL, DALLGGVLTAIAAYLSVRFLM, and LASFGVYCVIAGVFCLGWFML.

Belongs to the UppP family.

Its subcellular location is the cell inner membrane. The catalysed reaction is di-trans,octa-cis-undecaprenyl diphosphate + H2O = di-trans,octa-cis-undecaprenyl phosphate + phosphate + H(+). In terms of biological role, catalyzes the dephosphorylation of undecaprenyl diphosphate (UPP). Confers resistance to bacitracin. The sequence is that of Undecaprenyl-diphosphatase 2 from Burkholderia orbicola (strain AU 1054).